Consider the following 360-residue polypeptide: Epoxide hydrolase 3 (360 aa).

A helical membrane pass occupies residues 22–42; sequence AFMWSLVFSVALVAAAVYGCI. D173 (nucleophile) is an active-site residue. Y281 (proton donor) is an active-site residue. H337 functions as the Proton acceptor in the catalytic mechanism.

Belongs to the AB hydrolase superfamily. Epoxide hydrolase family.

Its subcellular location is the microsome membrane. The catalysed reaction is an epoxide + H2O = an ethanediol. The enzyme catalyses 9,10-epoxyoctadecanoate + H2O = 9,10-dihydroxyoctadecanoate. It carries out the reaction 9,10-epoxy-(12Z)-octadecenoate + H2O = 9,10-dihydroxy-(12Z)-octadecenoate. It catalyses the reaction 8,9-epoxy-(5Z,11Z,14Z)-eicosatrienoate + H2O = 8,9-dihydroxy-(5Z,11Z,14Z)-eicosatrienoate. The catalysed reaction is 11,12-epoxy-(5Z,8Z,14Z)-eicosatrienoate + H2O = 11,12-dihydroxy-(5Z,8Z,14Z)-eicosatrienoate. The enzyme catalyses 14,15-epoxy-(5Z,8Z,11Z)-eicosatrienoate + H2O = 14,15-dihydroxy-(5Z,8Z,11Z)-eicosatrienoate. Its activity is regulated as follows. Inhibited by 1-(1-acetylpiperidin-4-yl)-3-(4-(trifl uoromethoxy)phenyl)urea (TPAU), 1-cyclohexyl-3-dodecylurea (CDU), 12-(3-adamantan-1-yl-ureido)-dodecanoic acid (AUDA), 1-((3S, 5S, 7S)-adamantan-1-yl)-3-(5-(2-(2-ethoxyethoxy) ethoxy)pentyl)urea (AEPU) and to a lesser extent by 8-(3-((3S, 5S, 7S)-adamantan-1-yl)ureido) octanoic acid (AUOA). Its function is as follows. Catalyzes the hydrolysis of epoxide-containing fatty acids. Active in vitro against epoxyeicosatrienoic acids (EETs) including 8,9-EET, 9,10-EET, 11,12-EET and 14,15-EET and leukotoxin. The chain is Epoxide hydrolase 3 (EPHX3) from Homo sapiens (Human).